A 265-amino-acid chain; its full sequence is Polyglutamine-binding protein 1 (265 aa).

The WW domain maps to 46-80 (EGLPPSWYKVFDPSCGLPYYWNADTDLVSWLSPHD). At S94 the chain carries Phosphoserine. The interval 94 to 265 (SSNADAEEKL…AEASRTKQQD (172 aa)) is disordered. Over residues 99–175 (AEEKLDRSHD…DKADREEGKE (77 aa)) the composition is skewed to basic and acidic residues. Tandem repeats lie at residues 104 to 110 (DRSHDKS), 111 to 117 (DRGHDKS), 118 to 124 (DRSHEKP), 125 to 131 (DRGHDKS), 132 to 138 (DRGHDKS), 139 to 140 (DR), 141 to 142 (DR), 143 to 144 (ER), 150 to 151 (DR), 152 to 153 (ER), 154 to 155 (ER), 156 to 157 (DR), 158 to 159 (ER), 160 to 161 (DR), and 162 to 163 (DR). Positions 104-138 (DRSHDKSDRGHDKSDRSHEKPDRGHDKSDRGHDKS) are 5 X 7 AA approximate tandem repeats of D-R-[SG]-H-D-K-S. Residues 139-144 (DRDRER) form a 3 X 2 AA tandem repeats of [DE]-R region. A 7 X 2 AA tandem repeats of [DE]-R region spans residues 150–163 (DRERERDRERDRDR). The segment at 245-255 (YPSPGAVLRAN) is important for interaction with TXNL4A. Position 247 is a phosphoserine (S247).

As to quaternary structure, interacts with POU3F2/Brn-2, ATXN1, TXNL4A, HTT and AR. Interaction with ATXN1 correlates positively with the length of the polyglutamine tract. Interacts with RNA polymerase II large subunit in a phosphorylation-dependent manner. Forms a ternary complex with ATXN1 mutant and phosphorylated RNA polymerase II. Interacts (via C-terminus) with TXNL4A and CD2BP2. Interacts (via WW domain) with ATN1 and SF3B1, and may interact with additional splice factors. Interacts (via WW domain) with WBP11; Leading to reduce interaction between PQBP1 and TXNL4A. Interacts with CAPRIN1. Interacts with DDX1. Interacts with SFPQ. Interacts with KHSRP.

It is found in the nucleus. It localises to the nucleus speckle. Its subcellular location is the cytoplasmic granule. Intrinsically disordered protein that acts as a scaffold, and which is involved in different processes, such as pre-mRNA splicing, transcription regulation, innate immunity and neuron development. Interacts with splicing-related factors via the intrinsically disordered region and regulates alternative splicing of target pre-mRNA species. May suppress the ability of POU3F2 to transactivate the DRD1 gene in a POU3F2 dependent manner. Can activate transcription directly or via association with the transcription machinery. May be involved in ATXN1 mutant-induced cell death. The interaction with ATXN1 mutant reduces levels of phosphorylated RNA polymerase II large subunit. Involved in the assembly of cytoplasmic stress granule, possibly by participating in the transport of neuronal RNA granules. Also acts as an innate immune sensor of infection by retroviruses, by detecting the presence of reverse-transcribed DNA in the cytosol. Directly binds retroviral reverse-transcribed DNA in the cytosol and interacts with CGAS, leading to activate the cGAS-STING signaling pathway, triggering type-I interferon production. This chain is Polyglutamine-binding protein 1 (PQBP1), found in Pongo pygmaeus (Bornean orangutan).